The following is a 367-amino-acid chain: Probable peptidoglycan glycosyltransferase FtsW (367 aa).

9 helical membrane passes run 32–52 (LIFILIGLFAMAFTFLMPMKF), 57–77 (AFWGYCICFLLLALVLVPGIG), 87–107 (IPIGPFNFQPSEFAKLTMIVF), 119–139 (IHGLKGFLPIIIYLGIICFLL), 149–169 (MVVVAIVMSILLLGGLGFALF), 171–191 (LLFLSAVLLVIAAILTAPWRM), 251–271 (VVGEELGFVGIFFVILLFVLL), 296–316 (GVVVWFGVQAIVNLGVCFGVF), and 323–343 (LPFISYGGSSIVISLMAFGLL).

The protein belongs to the SEDS family. FtsW subfamily.

Its subcellular location is the cell inner membrane. It carries out the reaction [GlcNAc-(1-&gt;4)-Mur2Ac(oyl-L-Ala-gamma-D-Glu-L-Lys-D-Ala-D-Ala)](n)-di-trans,octa-cis-undecaprenyl diphosphate + beta-D-GlcNAc-(1-&gt;4)-Mur2Ac(oyl-L-Ala-gamma-D-Glu-L-Lys-D-Ala-D-Ala)-di-trans,octa-cis-undecaprenyl diphosphate = [GlcNAc-(1-&gt;4)-Mur2Ac(oyl-L-Ala-gamma-D-Glu-L-Lys-D-Ala-D-Ala)](n+1)-di-trans,octa-cis-undecaprenyl diphosphate + di-trans,octa-cis-undecaprenyl diphosphate + H(+). It participates in cell wall biogenesis; peptidoglycan biosynthesis. Functionally, peptidoglycan polymerase that is essential for cell division. The sequence is that of Probable peptidoglycan glycosyltransferase FtsW from Taylorella equigenitalis (strain MCE9).